Reading from the N-terminus, the 255-residue chain is 4-hydroxy-tetrahydrodipicolinate reductase (255 aa).

NAD(+) is bound by residues 9-14 (GFKGKM), Asp35, 89-91 (GTT), and 115-118 (APNF). The Proton donor/acceptor role is filled by His145. His146 contacts (S)-2,3,4,5-tetrahydrodipicolinate. Residue Lys149 is the Proton donor of the active site. 155-156 (GT) provides a ligand contact to (S)-2,3,4,5-tetrahydrodipicolinate.

The protein belongs to the DapB family.

Its subcellular location is the cytoplasm. It catalyses the reaction (S)-2,3,4,5-tetrahydrodipicolinate + NAD(+) + H2O = (2S,4S)-4-hydroxy-2,3,4,5-tetrahydrodipicolinate + NADH + H(+). The enzyme catalyses (S)-2,3,4,5-tetrahydrodipicolinate + NADP(+) + H2O = (2S,4S)-4-hydroxy-2,3,4,5-tetrahydrodipicolinate + NADPH + H(+). Its pathway is amino-acid biosynthesis; L-lysine biosynthesis via DAP pathway; (S)-tetrahydrodipicolinate from L-aspartate: step 4/4. In terms of biological role, catalyzes the conversion of 4-hydroxy-tetrahydrodipicolinate (HTPA) to tetrahydrodipicolinate. In Streptococcus pneumoniae serotype 4 (strain ATCC BAA-334 / TIGR4), this protein is 4-hydroxy-tetrahydrodipicolinate reductase.